The following is a 161-amino-acid chain: Anthranilate 1,2-dioxygenase small subunit (161 aa).

The protein belongs to the bacterial ring-hydroxylating dioxygenase beta subunit family. In terms of assembly, part of a multicomponent enzyme system composed of a reductase (AndAa), a ferredoxin (AndAb) and a two-subunit oxygenase component (AndAc and AndAd).

It catalyses the reaction anthranilate + NADH + O2 + 3 H(+) = catechol + NH4(+) + CO2 + NAD(+). It carries out the reaction anthranilate + NADPH + O2 + 3 H(+) = catechol + NH4(+) + CO2 + NADP(+). The protein operates within aromatic compound metabolism; anthranilate degradation via hydroxylation; catechol from anthranilate: step 1/1. Functionally, oxygenase component of anthranilate dioxygenase multicomponent enzyme system which catalyzes the incorporation of both atoms of molecular oxygen into anthranilate to form catechol. Can also act on benzoate and salicylate but not on 2-chlorobenzoate or o-toluate. The sequence is that of Anthranilate 1,2-dioxygenase small subunit from Burkholderia cepacia (Pseudomonas cepacia).